The primary structure comprises 2925 residues: TPR and ankyrin repeat-containing protein 1 (2925 aa).

TPR repeat units lie at residues 15-48 (AVLL…DPTY) and 50-82 (KGYY…VQRS). 6 ANK repeats span residues 168–198 (EKYV…SVET), 203–232 (PLHA…EWKG), 240–276 (DGCT…DPTL), 463–492 (SQER…DPRA), 497–518 (EGDT…DIGF), and 546–575 (NGNT…KFDI). 3 disordered regions span residues 612–669 (SRQD…LPGT), 706–741 (PEDC…DCSE), and 1077–1103 (VEPG…SIEV). The span at 624-641 (SKSTAPGHTSQLKSQGSF) shows a compositional bias: polar residues. The span at 720–730 (AGKEGKKDDKP) shows a compositional bias: basic and acidic residues. Over residues 1085–1103 (GGEEEEEEEDEEEEDSIEV) the composition is skewed to acidic residues. TPR repeat units lie at residues 1699–1732 (PAEW…EKEK) and 1793–1826 (LGKI…DLAL). A coiled-coil region spans residues 2301-2330 (EEFEKLLHQEEDNYNRELKALESEKDERGR).

This chain is TPR and ankyrin repeat-containing protein 1 (TRANK1), found in Homo sapiens (Human).